The following is a 511-amino-acid chain: MAEPSVESSSPGGSATSEDHEFDPSADMLVHDFDDERTLEEEEMMEGETNFSSEIEDLAREGDMPIHELLSLYGYDSTVRLPEEEEEEEEEEEGEDDEDADNDDNSGCSGENKEENIKDSSGQEDETQSSNDDPSQSVTSQDAQEIIRPRRCKYFDTNSEIEEESEEDEDYIPSEDWKKEIMVGSMFQAEIPVGVCRYKENEKVYENDDQLLWDPECLPEEKVVVFLKDASRRTGDEKGVEAIPEGSHIKDNEQALYELVKCSFDTEEALRRLRFNVKAAREELSVWTEEECRNFEQGLKAYGKDFHLIQANKVRTRSVGECVAFYYMWKKSERYDFFAQQTRFGKKKYNLHPGVTDYMDRLLDESESAASSRAPSPPPTASNSSNSQSEKEDGAVSSRNQNGVSSNGPGEILNKEEVKVEGLHVNGPTGGNKKPLLTDMDTNGYEANNLTTDPKLAHMTARNENDFDEKNERPAKRRRINSSGKESPGSSEFFQEAVSHGKFEEHENTND.

Low complexity predominate over residues 1–16; sequence MAEPSVESSSPGGSAT. Residues 1–171 form a disordered region; the sequence is MAEPSVESSS…EEESEEDEDY (171 aa). Serine 10 carries the post-translational modification Phosphoserine. Residues 17 to 36 show a composition bias toward basic and acidic residues; sequence SEDHEFDPSADMLVHDFDDE. The segment covering 37–46 has biased composition (acidic residues); that stretch reads RTLEEEEMME. The span at 57-66 shows a compositional bias: basic and acidic residues; the sequence is DLAREGDMPI. Residues 83–104 are compositionally biased toward acidic residues; sequence EEEEEEEEEEEGEDDEDADNDD. The segment covering 128–143 has biased composition (polar residues); it reads QSSNDDPSQSVTSQDA. At serine 140 the chain carries Phosphoserine. The residue at position 154 (tyrosine 154) is a Phosphotyrosine. Residues serine 159 and serine 165 each carry the phosphoserine modification. Over residues 159–171 the composition is skewed to acidic residues; the sequence is SEIEEESEEDEDY. The ELM2 domain maps to 179-277; the sequence is KEIMVGSMFQ…EALRRLRFNV (99 aa). Lysine 238 participates in a covalent cross-link: Glycyl lysine isopeptide (Lys-Gly) (interchain with G-Cter in SUMO2). An SANT domain is found at 282 to 334; sequence EELSVWTEEECRNFEQGLKAYGKDFHLIQANKVRTRSVGECVAFYYMWKKSER. The interval 365–511 is disordered; sequence ESESAASSRA…KFEEHENTND (147 aa). Residues serine 366, serine 368, and serine 376 each carry the phosphoserine modification. Residues 397-408 show a composition bias toward polar residues; the sequence is SSRNQNGVSSNG. Basic and acidic residues-rich tracts occupy residues 413–422 and 461–474; these read LNKEEVKVEG and ARNENDFDEKNERP. Lysine 419 is covalently cross-linked (Glycyl lysine isopeptide (Lys-Gly) (interchain with G-Cter in SUMO2)). The segment covering 481–493 has biased composition (polar residues); the sequence is NSSGKESPGSSEF. Serine 482, serine 487, and serine 490 each carry phosphoserine. Residues 499 to 511 show a composition bias toward basic and acidic residues; the sequence is SHGKFEEHENTND.

In terms of assembly, interacts with HDAC1. Part of a complex containing at least CDYL, MIER1, MIER2, HDAC1 and HDAC2. Ubiquitously expressed. Isoform 1 is only expressed in testis.

It localises to the nucleus. In terms of biological role, transcriptional repressor regulating the expression of a number of genes including SP1 target genes. Probably functions through recruitment of HDAC1 a histone deacetylase involved in chromatin silencing. This is Mesoderm induction early response protein 1 (Mier1) from Mus musculus (Mouse).